The chain runs to 382 residues: Flap endonuclease 1 (382 aa).

The N-domain stretch occupies residues 1–105 (MGIKGLNAII…HELTKRSSRR (105 aa)). Position 34 (Asp34) interacts with Mg(2+). The DNA site is built by Arg47 and Arg71. Positions 87, 156, 158, 177, and 179 each coordinate Mg(2+). An I-domain region spans residues 120-251 (EKMKQERRLV…VTALKLIKTH (132 aa)). Residue Glu156 coordinates DNA. DNA-binding residues include Gly229 and Asp231. Residue Asp231 coordinates Mg(2+). The interaction with PCNA stretch occupies residues 339 to 347 (IQGRLDGFF). Positions 358 to 382 (AAAAKRAQENKKLNKNKNKVTKGRR) are disordered. Residues 370–382 (LNKNKNKVTKGRR) show a composition bias toward basic residues.

Belongs to the XPG/RAD2 endonuclease family. FEN1 subfamily. In terms of assembly, interacts with PCNA. Three molecules of RAD27 bind to one PCNA trimer with each molecule binding to one PCNA monomer. PCNA stimulates the nuclease activity without altering cleavage specificity. It depends on Mg(2+) as a cofactor. In terms of processing, phosphorylated. Phosphorylation upon DNA damage induces relocalization to the nuclear plasma.

Its subcellular location is the nucleus. It is found in the nucleolus. It localises to the nucleoplasm. The protein resides in the mitochondrion. Structure-specific nuclease with 5'-flap endonuclease and 5'-3' exonuclease activities involved in DNA replication and repair. During DNA replication, cleaves the 5'-overhanging flap structure that is generated by displacement synthesis when DNA polymerase encounters the 5'-end of a downstream Okazaki fragment. It enters the flap from the 5'-end and then tracks to cleave the flap base, leaving a nick for ligation. Also involved in the long patch base excision repair (LP-BER) pathway, by cleaving within the apurinic/apyrimidinic (AP) site-terminated flap. Acts as a genome stabilization factor that prevents flaps from equilibrating into structures that lead to duplications and deletions. Also possesses 5'-3' exonuclease activity on nicked or gapped double-stranded DNA, and exhibits RNase H activity. Also involved in replication and repair of rDNA and in repairing mitochondrial DNA. This is Flap endonuclease 1 from Saccharomyces cerevisiae (strain YJM789) (Baker's yeast).